Here is a 270-residue protein sequence, read N- to C-terminus: Tetraspanin-18 (270 aa).

At 1-15 the chain is on the cytoplasmic side; that stretch reads MRRNCCHVSFASTLK. The helical transmembrane segment at 16–36 threads the bilayer; the sequence is ILNFVQAFIGVSIIIYSIWML. The Extracellular portion of the chain corresponds to 37 to 99; sequence HEYSRHLPVD…LRSLDLPAPW (63 aa). A helical membrane pass occupies residues 100–120; that stretch reads FIYSFMAVGILVCIVTFIGFI. The Cytoplasmic segment spans residues 121–132; it reads AAEAINGCCLCF. Residues 133-153 form a helical membrane-spanning segment; it reads YSILKTLLILLEAALVAYIAI. Over 154–183 the chain is Extracellular; the sequence is DRHWEKDLPYDPTGELSSLRAFIEENIDIC. A helical transmembrane segment spans residues 184 to 204; the sequence is KWVGIAVVAVQLLSLLLAMVL. The Cytoplasmic segment spans residues 205-270; the sequence is RAMVSTPKPE…NQSPPVNPKG (66 aa). The interval 212–249 is disordered; that stretch reads KPELDEEEDDENPRSRTWDPLLGPQGNQAPAGSSKIEN. Residues 236–249 are compositionally biased toward polar residues; that stretch reads QGNQAPAGSSKIEN. Ser-245 bears the Phosphoserine mark.

This sequence belongs to the tetraspanin (TM4SF) family. As to quaternary structure, homodimer. Constituent of tobamovirus replication complex. In terms of tissue distribution, expressed in rosette leaves.

Its subcellular location is the membrane. The protein localises to the vacuole membrane. May be involved in the regulation of cell differentiation. In terms of biological role, promotes intracellular multiplication of tobamoviruses, probably being a component of the replication complex. The protein is Tetraspanin-18 (TOM2AH2) of Arabidopsis thaliana (Mouse-ear cress).